A 468-amino-acid chain; its full sequence is Elongation factor 1-alpha (468 aa).

The tr-type G domain maps to 6 to 244 (KPHINIVVIG…DNIPLPARPS (239 aa)). A G1 region spans residues 15–22 (GHVDSGKS). GTP is bound at residue 15-22 (GHVDSGKS). The tract at residues 71-75 (GITID) is G2. The tract at residues 92–95 (DAPG) is G3. GTP-binding positions include 92-96 (DAPGH) and 154-157 (NKID). Residues 154–157 (NKID) are G4. A G5 region spans residues 195-197 (SGW). 2 positions are modified to 5-glutamyl glycerylphosphorylethanolamine: Glu303 and Glu376.

This sequence belongs to the TRAFAC class translation factor GTPase superfamily. Classic translation factor GTPase family. EF-Tu/EF-1A subfamily.

It is found in the cytoplasm. Its function is as follows. This protein promotes the GTP-dependent binding of aminoacyl-tRNA to the A-site of ribosomes during protein biosynthesis. The sequence is that of Elongation factor 1-alpha from Hydra vulgaris (Hydra).